The chain runs to 418 residues: Cytochrome P450 monooxygenase ABA2 (418 aa).

Position 355 (cysteine 355) interacts with heme.

The protein belongs to the cytochrome P450 family. Requires heme as cofactor.

The protein operates within hormone biosynthesis. Its function is as follows. Cytochrome P450 monooxygenase involved in the biosynthesis of abscisic acid (ABA), a phytohormone that acts antagonistically toward salicylic acid (SA), jasmonic acid (JA) and ethylene (ETH) signaling, to impede plant defense responses. During pathogen-host interaction, ABA plays a dual role in disease severity by increasing plant susceptibility and accelerating pathogenesis in the fungus itself. The first step of the pathway catalyzes the reaction from farnesyl diphosphate to alpha-ionylideneethane performed by the alpha-ionylideneethane synthase ABA3 via a three-step reaction mechanism involving 2 neutral intermediates, beta-farnesene and allofarnesene. The cytochrome P450 monooxygenase ABA1 might then be involved in the conversion of alpha-ionylideneethane to alpha-ionylideneacetic acid. Alpha-ionylideneacetic acid is further converted to abscisic acid in 2 steps involving the cytochrome P450 monooxygenase ABA2 and the short-chain dehydrogenase/reductase ABA4, via the intermediates 1'-deoxy-ABA or 1',4'-trans-diol-ABA, depending on the order of action of these 2 enzymes. ABA2 is responsible for the hydroxylation of carbon atom C-1' and ABA4 might be involved in the oxidation of the C-4' carbon atom. In Pyricularia oryzae (strain Y34) (Rice blast fungus), this protein is Cytochrome P450 monooxygenase ABA2.